An 86-amino-acid polypeptide reads, in one-letter code: Putative membrane protein insertion efficiency factor (86 aa).

Belongs to the UPF0161 family.

It is found in the cell inner membrane. Its function is as follows. Could be involved in insertion of integral membrane proteins into the membrane. The chain is Putative membrane protein insertion efficiency factor from Histophilus somni (strain 129Pt) (Haemophilus somnus).